The chain runs to 335 residues: Heat-inducible transcription repressor HrcA (335 aa).

Belongs to the HrcA family.

Its function is as follows. Negative regulator of class I heat shock genes (grpE-dnaK-dnaJ and groELS operons). Prevents heat-shock induction of these operons. The chain is Heat-inducible transcription repressor HrcA from Mesomycoplasma hyopneumoniae (strain 232) (Mycoplasma hyopneumoniae).